The following is a 602-amino-acid chain: Elongation factor 4 (602 aa).

The 183-residue stretch at 7–189 folds into the tr-type G domain; the sequence is KFIRNFSIIA…QLVVAIPPPV (183 aa). GTP is bound by residues 19–24 and 136–139; these read DHGKST and NKID.

It belongs to the TRAFAC class translation factor GTPase superfamily. Classic translation factor GTPase family. LepA subfamily.

It is found in the cell inner membrane. It catalyses the reaction GTP + H2O = GDP + phosphate + H(+). Its function is as follows. Required for accurate and efficient protein synthesis under certain stress conditions. May act as a fidelity factor of the translation reaction, by catalyzing a one-codon backward translocation of tRNAs on improperly translocated ribosomes. Back-translocation proceeds from a post-translocation (POST) complex to a pre-translocation (PRE) complex, thus giving elongation factor G a second chance to translocate the tRNAs correctly. Binds to ribosomes in a GTP-dependent manner. The chain is Elongation factor 4 from Coxiella burnetii (strain Dugway 5J108-111).